The following is a 141-amino-acid chain: Large ribosomal subunit protein bL21 (141 aa).

Residues Ala111 to Glu141 form a disordered region. A compositionally biased stretch (low complexity) spans Glu118–Ala133.

It belongs to the bacterial ribosomal protein bL21 family. As to quaternary structure, part of the 50S ribosomal subunit. Contacts protein L20.

Functionally, this protein binds to 23S rRNA in the presence of protein L20. The sequence is that of Large ribosomal subunit protein bL21 from Synechococcus sp. (strain JA-2-3B'a(2-13)) (Cyanobacteria bacterium Yellowstone B-Prime).